The primary structure comprises 215 residues: Probable GTP-binding protein EngB (215 aa).

An EngB-type G domain is found at 30-204; sequence EGLEVAFAGR…QMVLAQWLGL (175 aa). GTP contacts are provided by residues 38-45, 64-68, 82-85, 149-152, and 182-185; these read GRSNAGKS, GRTQL, DLPG, TKAD, and LFSA. The Mg(2+) site is built by Ser45 and Thr66.

The protein belongs to the TRAFAC class TrmE-Era-EngA-EngB-Septin-like GTPase superfamily. EngB GTPase family. Requires Mg(2+) as cofactor.

Functionally, necessary for normal cell division and for the maintenance of normal septation. The protein is Probable GTP-binding protein EngB of Pseudomonas paraeruginosa (strain DSM 24068 / PA7) (Pseudomonas aeruginosa (strain PA7)).